Consider the following 108-residue polypeptide: E3 ubiquitin-protein ligase Midline-1 (108 aa).

One can recognise a B30.2/SPRY domain in the interval 1-100 (KSAPKHEWIG…IITGLPIPDH (100 aa)).

The protein belongs to the TRIM/RBCC family. In terms of assembly, homodimer or heterodimer with MID2. Interacts with IGBP1.

Its subcellular location is the cytoplasm. The protein resides in the cytoskeleton. It carries out the reaction S-ubiquitinyl-[E2 ubiquitin-conjugating enzyme]-L-cysteine + [acceptor protein]-L-lysine = [E2 ubiquitin-conjugating enzyme]-L-cysteine + N(6)-ubiquitinyl-[acceptor protein]-L-lysine.. In terms of biological role, has E3 ubiquitin ligase activity towards IGBP1, promoting its monoubiquitination, which results in deprotection of the catalytic subunit of protein phosphatase PP2A, and its subsequent degradation by polyubiquitination. The sequence is that of E3 ubiquitin-protein ligase Midline-1 (Mid1) from Mus caroli (Ryukyu mouse).